The sequence spans 365 residues: Heme A synthase (365 aa).

5 helical membrane passes run 23-43, 109-129, 137-157, 172-192, and 208-228; these read LLRI…LVGG, LLAR…WLTG, LPLV…WWMV, LATH…ILRG, and GFAA…ALVA. Heme is bound at residue histidine 272. The next 3 membrane-spanning stretches (helical) occupy residues 274–294, 303–323, and 327–347; these read LGAY…ARAL, AVLF…TLLM, and IHVA…SVAH. Histidine 333 is a binding site for heme.

The protein belongs to the COX15/CtaA family. Type 2 subfamily. In terms of assembly, interacts with CtaB. Heme b serves as cofactor.

It is found in the cell membrane. The enzyme catalyses Fe(II)-heme o + 2 A + H2O = Fe(II)-heme a + 2 AH2. It functions in the pathway porphyrin-containing compound metabolism; heme A biosynthesis; heme A from heme O: step 1/1. Its function is as follows. Catalyzes the conversion of heme O to heme A by two successive hydroxylations of the methyl group at C8. The first hydroxylation forms heme I, the second hydroxylation results in an unstable dihydroxymethyl group, which spontaneously dehydrates, resulting in the formyl group of heme A. This Agrobacterium fabrum (strain C58 / ATCC 33970) (Agrobacterium tumefaciens (strain C58)) protein is Heme A synthase.